Here is a 199-residue protein sequence, read N- to C-terminus: dITP/XTP pyrophosphatase (199 aa).

8–13 (TSNKNK) is a binding site for substrate. Residues Glu-40 and Asp-68 each contribute to the Mg(2+) site. Asp-68 serves as the catalytic Proton acceptor. Substrate contacts are provided by residues Ser-69, 154–157 (FGYD), Lys-177, and 182–183 (HR).

This sequence belongs to the HAM1 NTPase family. In terms of assembly, homodimer. Requires Mg(2+) as cofactor.

The enzyme catalyses XTP + H2O = XMP + diphosphate + H(+). It carries out the reaction dITP + H2O = dIMP + diphosphate + H(+). The catalysed reaction is ITP + H2O = IMP + diphosphate + H(+). Its function is as follows. Pyrophosphatase that catalyzes the hydrolysis of nucleoside triphosphates to their monophosphate derivatives, with a high preference for the non-canonical purine nucleotides XTP (xanthosine triphosphate), dITP (deoxyinosine triphosphate) and ITP. Seems to function as a house-cleaning enzyme that removes non-canonical purine nucleotides from the nucleotide pool, thus preventing their incorporation into DNA/RNA and avoiding chromosomal lesions. The polypeptide is dITP/XTP pyrophosphatase (Wigglesworthia glossinidia brevipalpis).